A 217-amino-acid polypeptide reads, in one-letter code: Large ribosomal subunit protein uL1 (217 aa).

Belongs to the universal ribosomal protein uL1 family. As to quaternary structure, part of the 50S ribosomal subunit.

In terms of biological role, binds directly to 23S rRNA. Probably involved in E site tRNA release. Its function is as follows. Protein L1 is also a translational repressor protein, it controls the translation of its operon by binding to its mRNA. The polypeptide is Large ribosomal subunit protein uL1 (Aeropyrum pernix (strain ATCC 700893 / DSM 11879 / JCM 9820 / NBRC 100138 / K1)).